We begin with the raw amino-acid sequence, 583 residues long: Leucine aminopeptidase 2, chloroplastic (583 aa).

A chloroplast-targeting transit peptide spans 1 to 70 (MAVTLVTSFA…ISHATLGLTQ (70 aa)). Mn(2+) is bound by residues Lys351 and Asp356. Lys363 is an active-site residue. Mn(2+)-binding residues include Asp376, Asp436, and Glu438. The active site involves Arg440.

This sequence belongs to the peptidase M17 family. As to quaternary structure, homohexamer (dimer of homotrimers). Mn(2+) is required as a cofactor.

It localises to the plastid. Its subcellular location is the chloroplast. The catalysed reaction is Release of an N-terminal amino acid, Xaa-|-Yaa-, in which Xaa is preferably Leu, but may be other amino acids including Pro although not Arg or Lys, and Yaa may be Pro. Amino acid amides and methyl esters are also readily hydrolyzed, but rates on arylamides are exceedingly low.. It carries out the reaction Release of N-terminal proline from a peptide.. Presumably involved in the processing and regular turnover of intracellular proteins. Catalyzes the removal of unsubstituted N-terminal amino acids from various peptides. Possesses leucine aminopeptidase activity against the model substrate leucine-amido methyl coumarin. Does not seem to possess Cys-Gly dipeptidase activity. Functionally, functions as a molecular chaperone to protect proteins from heat-induced damage. The sequence is that of Leucine aminopeptidase 2, chloroplastic from Arabidopsis thaliana (Mouse-ear cress).